A 202-amino-acid polypeptide reads, in one-letter code: MVIQRKYRASRRLGVSLWGRSKDPFNTRNYPPGQHGNMGYKKPSDFGKQFGAHKKFKFYYAISSKQMRNMFLKAYKKKGDTGDNFVGLLESMLSSVLYNSGLVPTIFSARQLISHKHVLVNGKVVNISSYSVKPGDTIKLREKAVNLPSVLAAIDAQEQKVPDYLEVDVKERSVKYLRVPKYYEVPYPANMEVNLVIEFYSR.

The S4 RNA-binding domain occupies 91–154 (SMLSSVLYNS…VNLPSVLAAI (64 aa)).

This sequence belongs to the universal ribosomal protein uS4 family. In terms of assembly, part of the 30S ribosomal subunit. Contacts protein S5. The interaction surface between S4 and S5 is involved in control of translational fidelity.

Functionally, one of the primary rRNA binding proteins, it binds directly to 16S rRNA where it nucleates assembly of the body of the 30S subunit. In terms of biological role, with S5 and S12 plays an important role in translational accuracy. The polypeptide is Small ribosomal subunit protein uS4 (Ehrlichia ruminantium (strain Gardel)).